The sequence spans 298 residues: NAD kinase (298 aa).

The active-site Proton acceptor is Asp80. NAD(+) contacts are provided by residues 80–81, 154–155, Arg182, Asp184, 195–200, Ala219, and Gln253; these read DG, ND, and TAYALS.

It belongs to the NAD kinase family. A divalent metal cation serves as cofactor.

Its subcellular location is the cytoplasm. It catalyses the reaction NAD(+) + ATP = ADP + NADP(+) + H(+). Involved in the regulation of the intracellular balance of NAD and NADP, and is a key enzyme in the biosynthesis of NADP. Catalyzes specifically the phosphorylation on 2'-hydroxyl of the adenosine moiety of NAD to yield NADP. This Delftia acidovorans (strain DSM 14801 / SPH-1) protein is NAD kinase.